Consider the following 512-residue polypeptide: MTNVPWLTAIVLFPVSAGLLIPLLPGRGNHIVRWYALGICLLDLILMTYVFGCYYNLSDLPVQLKEDYCWIEILDFHWRLGVDGLSIGLILLTGFVTTLATLAAWPVTRNPKLFYFLMLAMYSGQLGLFASQDILLFFVMWELELIPVYLLLSMWGGRRRLYAATKFILYTAGGSIFLLAGLLTASLWGSNAPVLDFEILSHKSYPLGLEILIYLGFLIAYAVKLPAFPLHTWLPDTHGEAHYSTCMLLAGILLKMGGYGFIRVNMELLPHAHTVFAPWLVALGAYQIVYAALVSFAQRNLKRRIAYSSVSHMGFVLVGAGSLSDLGLSGAMLQMISHGLIGASLFFLAGTSYDRTRTLMLREMGAWASQMPKMFAMFTTCAMASLALPGMSGFVSELMVFFGMVTSAAYSPYFRAIITLIEAVGIILTPIYLLSMVRQMFYGSRISSVSVFNNIDAGPREVFVLGSLLLPMIGIGIYPNFALPLWSAKTQAVASLVQPTSILYSQTLYNIQ.

14 consecutive transmembrane segments (helical) span residues 4–24 (VPWLTAIVLFPVSAGLLIPLL), 34–54 (WYALGICLLDLILMTYVFGCY), 87–107 (IGLILLTGFVTTLATLAAWPV), 111–131 (PKLFYFLMLAMYSGQLGLFAS), 134–154 (ILLFFVMWELELIPVYLLLSM), 167–187 (FILYTAGGSIFLLAGLLTASL), 208–228 (GLEILIYLGFLIAYAVKLPAF), 242–262 (HYSTCMLLAGILLKMGGYGFI), 274–294 (TVFAPWLVALGAYQIVYAALV), 308–328 (SSVSHMGFVLVGAGSLSDLGL), 330–350 (GAMLQMISHGLIGASLFFLAG), 374–396 (MFAMFTTCAMASLALPGMSGFVS), 417–437 (IITLIEAVGIILTPIYLLSMV), and 462–482 (VFVLGSLLLPMIGIGIYPNFA).

This sequence belongs to the complex I subunit 4 family.

The protein localises to the plastid. It localises to the chloroplast thylakoid membrane. The catalysed reaction is a plastoquinone + NADH + (n+1) H(+)(in) = a plastoquinol + NAD(+) + n H(+)(out). It catalyses the reaction a plastoquinone + NADPH + (n+1) H(+)(in) = a plastoquinol + NADP(+) + n H(+)(out). This chain is NAD(P)H-quinone oxidoreductase chain 4, chloroplastic, found in Zygnema circumcarinatum (Green alga).